Here is a 401-residue protein sequence, read N- to C-terminus: Sorting nexin-4 (401 aa).

Residues 17–139 (FLQCLVTEPR…AFLENPNWNN (123 aa)) enclose the PX domain. 4 residues coordinate a 1,2-diacyl-sn-glycero-3-phospho-(1D-myo-inositol-3-phosphate): R60, S62, K86, and R105. S62 is subject to Phosphoserine. Residues 190 to 292 (ISNLEGSIQK…DVEALQEYSA (103 aa)) are a coiled coil.

This sequence belongs to the sorting nexin family.

Its subcellular location is the cytoplasm. It is found in the cytosol. The protein localises to the preautophagosomal structure membrane. It localises to the endosome membrane. Functionally, sorting nexin, involved in the separation or division of vacuoles throughout the entire life cycle of the cells. Involved in retrieval of late-Golgi SNAREs from post-Golgi endosomes to the trans-Golgi network, for cytoplasm to vacuole transport (Cvt), and autophagy of large cargos including mitophagy, pexophagy and glycophagy. This is Sorting nexin-4 (snx4) from Schizosaccharomyces pombe (strain 972 / ATCC 24843) (Fission yeast).